Here is a 366-residue protein sequence, read N- to C-terminus: Aminomethyltransferase (366 aa).

The protein belongs to the GcvT family. As to quaternary structure, the glycine cleavage system is composed of four proteins: P, T, L and H.

It catalyses the reaction N(6)-[(R)-S(8)-aminomethyldihydrolipoyl]-L-lysyl-[protein] + (6S)-5,6,7,8-tetrahydrofolate = N(6)-[(R)-dihydrolipoyl]-L-lysyl-[protein] + (6R)-5,10-methylene-5,6,7,8-tetrahydrofolate + NH4(+). The glycine cleavage system catalyzes the degradation of glycine. The polypeptide is Aminomethyltransferase (Chlorobium chlorochromatii (strain CaD3)).